Consider the following 78-residue polypeptide: RNA-binding protein KhpA (78 aa).

Residues 29–78 form the KH domain; sequence TIIYELSVAKPDIGKIIGKEGRTIKAIRTLLVSVASRNNVRVSLEIMEEK.

This sequence belongs to the KhpA RNA-binding protein family.

The protein resides in the cytoplasm. Functionally, a probable RNA-binding protein. This chain is RNA-binding protein KhpA, found in Chlamydia pneumoniae (Chlamydophila pneumoniae).